We begin with the raw amino-acid sequence, 172 residues long: Large ribosomal subunit protein uL10 (172 aa).

This sequence belongs to the universal ribosomal protein uL10 family. In terms of assembly, part of the ribosomal stalk of the 50S ribosomal subunit. The N-terminus interacts with L11 and the large rRNA to form the base of the stalk. The C-terminus forms an elongated spine to which L12 dimers bind in a sequential fashion forming a multimeric L10(L12)X complex.

Functionally, forms part of the ribosomal stalk, playing a central role in the interaction of the ribosome with GTP-bound translation factors. This Francisella tularensis subsp. tularensis (strain FSC 198) protein is Large ribosomal subunit protein uL10.